A 143-amino-acid polypeptide reads, in one-letter code: Sporulation-specific cell division protein SsgB (143 aa).

The protein belongs to the SsgA family. As to quaternary structure, interacts with SsgA. Interacts with FtsZ (via N-terminus).

It is found in the cell septum. Involved in sporulation-specific cell division. Required for early stages of sporulation. Important in the process of growth cessation prior to sporulation-specific cell division. Recruits cell division protein FtsZ to the future septum sites and tethers the contractile ring structure (Z ring) to the cytoplasmic membrane during sporulation. Stimulates polymerization and filament length of FtsZ in vitro. In Frankia casuarinae (strain DSM 45818 / CECT 9043 / HFP020203 / CcI3), this protein is Sporulation-specific cell division protein SsgB.